The sequence spans 551 residues: Hydroxylamine reductase (551 aa).

C3, C6, C18, and C25 together coordinate [2Fe-2S] cluster. Residues H249, E273, C317, C405, C433, C459, E493, and K495 each coordinate hybrid [4Fe-2O-2S] cluster. C405 bears the Cysteine persulfide mark.

This sequence belongs to the HCP family. [2Fe-2S] cluster is required as a cofactor. Requires hybrid [4Fe-2O-2S] cluster as cofactor.

Its subcellular location is the cytoplasm. The enzyme catalyses A + NH4(+) + H2O = hydroxylamine + AH2 + H(+). Catalyzes the reduction of hydroxylamine to form NH(3) and H(2)O. This Actinobacillus pleuropneumoniae serotype 7 (strain AP76) protein is Hydroxylamine reductase.